The primary structure comprises 31 residues: Photosystem II reaction center protein T (31 aa).

The chain crosses the membrane as a helical span at residues 3-23 (SLVYIFVFVVALGVLFFAIAF).

The protein belongs to the PsbT family. In terms of assembly, PSII is composed of 1 copy each of membrane proteins PsbA, PsbB, PsbC, PsbD, PsbE, PsbF, PsbH, PsbI, PsbJ, PsbK, PsbL, PsbM, PsbT, PsbX, PsbY, PsbZ, Psb30/Ycf12, peripheral proteins PsbO, CyanoQ (PsbQ), PsbU, PsbV and a large number of cofactors. It forms dimeric complexes.

Its subcellular location is the cellular thylakoid membrane. In terms of biological role, found at the monomer-monomer interface of the photosystem II (PS II) dimer, plays a role in assembly and dimerization of PSII. PSII is a light-driven water plastoquinone oxidoreductase, using light energy to abstract electrons from H(2)O, generating a proton gradient subsequently used for ATP formation. The polypeptide is Photosystem II reaction center protein T (Synechococcus elongatus (strain ATCC 33912 / PCC 7942 / FACHB-805) (Anacystis nidulans R2)).